The chain runs to 64 residues: p7b (64 aa).

The Cytoplasmic segment spans residues 1–12; the sequence is MECVCVDSSWPQ. Residues 13–30 traverse the membrane as a helical; Signal-anchor for type II membrane protein segment; the sequence is WLRNLILGILISSILFIL. The Lumenal segment spans residues 31–64; that stretch reads TKTQDTVAVYHEPSVYSIDQTQKFQKIDIHNGGK.

This sequence belongs to the gammacarmovirus double gene block protein 2 family.

It is found in the host endoplasmic reticulum membrane. Its function is as follows. Required for cell-to-cell movement of virions in the host plant together with p7a. The protein is p7b of Maize chlorotic mottle virus (isolate United States/Kansas/1987) (MCMV).